We begin with the raw amino-acid sequence, 106 residues long: Large ribosomal subunit protein uL24 (106 aa).

This sequence belongs to the universal ribosomal protein uL24 family. As to quaternary structure, part of the 50S ribosomal subunit.

One of two assembly initiator proteins, it binds directly to the 5'-end of the 23S rRNA, where it nucleates assembly of the 50S subunit. Functionally, one of the proteins that surrounds the polypeptide exit tunnel on the outside of the subunit. This chain is Large ribosomal subunit protein uL24, found in Desulforamulus reducens (strain ATCC BAA-1160 / DSM 100696 / MI-1) (Desulfotomaculum reducens).